A 146-amino-acid polypeptide reads, in one-letter code: Hemoglobin subunit beta (146 aa).

Positions 2-146 (QWTAEEKQLI…VAHALARKYH (145 aa)) constitute a Globin domain. 2 residues coordinate heme b: histidine 63 and histidine 92.

This sequence belongs to the globin family. Heterotetramer of two alpha chains and two beta chains. In terms of tissue distribution, red blood cells.

Its function is as follows. Involved in oxygen transport from the lung to the various peripheral tissues. The protein is Hemoglobin subunit beta (HBB) of Rhea americana (Greater rhea).